Here is a 426-residue protein sequence, read N- to C-terminus: Glutamyl-tRNA reductase (426 aa).

Residues 50 to 53 (TCNR), S108, 113 to 115 (EPQ), and Q119 each bind substrate. The Nucleophile role is filled by C51. An NADP(+)-binding site is contributed by 188 to 193 (GAGEMI).

It belongs to the glutamyl-tRNA reductase family. In terms of assembly, homodimer.

The catalysed reaction is (S)-4-amino-5-oxopentanoate + tRNA(Glu) + NADP(+) = L-glutamyl-tRNA(Glu) + NADPH + H(+). It functions in the pathway porphyrin-containing compound metabolism; protoporphyrin-IX biosynthesis; 5-aminolevulinate from L-glutamyl-tRNA(Glu): step 1/2. In terms of biological role, catalyzes the NADPH-dependent reduction of glutamyl-tRNA(Glu) to glutamate 1-semialdehyde (GSA). The protein is Glutamyl-tRNA reductase of Polaromonas sp. (strain JS666 / ATCC BAA-500).